Here is a 264-residue protein sequence, read N- to C-terminus: Rhamnosyltransferase WbbL (264 aa).

The protein belongs to the glycosyltransferase 2 family.

Its pathway is bacterial outer membrane biogenesis; lipopolysaccharide biosynthesis. In terms of biological role, rhamnosyltransferase involved in lipopolysaccharide biosynthesis. This is Rhamnosyltransferase WbbL (wbbL) from Escherichia coli (strain K12).